Here is a 265-residue protein sequence, read N- to C-terminus: Undecaprenyl-diphosphatase (265 aa).

Transmembrane regions (helical) follow at residues 38–58 (RSDF…CLAL), 75–95 (RDYV…GLIV), 108–128 (PVAW…HFAG), 135–155 (VVTW…GVFP), 181–201 (FVFM…LLEM), 215–235 (VAVA…WLLG), and 244–264 (VFAV…PAAA).

This sequence belongs to the UppP family.

The protein resides in the cell inner membrane. It catalyses the reaction di-trans,octa-cis-undecaprenyl diphosphate + H2O = di-trans,octa-cis-undecaprenyl phosphate + phosphate + H(+). In terms of biological role, catalyzes the dephosphorylation of undecaprenyl diphosphate (UPP). Confers resistance to bacitracin. The sequence is that of Undecaprenyl-diphosphatase from Xanthomonas euvesicatoria pv. vesicatoria (strain 85-10) (Xanthomonas campestris pv. vesicatoria).